Reading from the N-terminus, the 502-residue chain is Cardiolipin synthase (502 aa).

3 helical membrane-spanning segments follow: residues 7-27, 29-49, and 59-79; these read VAIL…YWGG, LLGI…FVIS, and IAWL…YLLF. 2 consecutive PLD phosphodiesterase domains span residues 237 to 264 and 415 to 442; these read INFR…GDEY and EKGF…DMRS. Active-site residues include H242, K244, D249, H420, K422, and D427.

This sequence belongs to the phospholipase D family. Cardiolipin synthase subfamily.

The protein resides in the cell membrane. It carries out the reaction 2 a 1,2-diacyl-sn-glycero-3-phospho-(1'-sn-glycerol) = a cardiolipin + glycerol. In terms of biological role, catalyzes the reversible phosphatidyl group transfer from one phosphatidylglycerol molecule to another to form cardiolipin (CL) (diphosphatidylglycerol) and glycerol. The polypeptide is Cardiolipin synthase (cls) (Geobacillus thermodenitrificans (strain NG80-2)).